Here is a 157-residue protein sequence, read N- to C-terminus: uncharacterized protein (157 aa).

Residues leucine 6–leucine 26 form a helical membrane-spanning segment. The 125-residue stretch at alanine 33–proline 157 folds into the Ricin B-type lectin domain.

The protein resides in the membrane. This is an uncharacterized protein from Mycobacterium tuberculosis (strain CDC 1551 / Oshkosh).